The sequence spans 81 residues: Accessory gland protein Acp63F (81 aa).

The N-terminal stretch at methionine 1–alanine 16 is a signal peptide.

In terms of tissue distribution, main cells of accessory gland and seminal fluid.

The protein localises to the secreted. Its function is as follows. Responsible for physiological and behavioral changes in mated female flies. This chain is Accessory gland protein Acp63F (Acp63F), found in Drosophila melanogaster (Fruit fly).